Consider the following 485-residue polypeptide: Pup--protein ligase (485 aa).

Glu-33 provides a ligand contact to Mg(2+). ATP is bound at residue Arg-76. Tyr-78 contacts Mg(2+). The active-site Proton acceptor is Asp-80. Glu-86 lines the Mg(2+) pocket. The ATP site is built by Thr-89 and Trp-451.

It belongs to the Pup ligase/Pup deamidase family. Pup-conjugating enzyme subfamily.

The enzyme catalyses ATP + [prokaryotic ubiquitin-like protein]-L-glutamate + [protein]-L-lysine = ADP + phosphate + N(6)-([prokaryotic ubiquitin-like protein]-gamma-L-glutamyl)-[protein]-L-lysine.. Its pathway is protein degradation; proteasomal Pup-dependent pathway. The protein operates within protein modification; protein pupylation. Functionally, catalyzes the covalent attachment of the prokaryotic ubiquitin-like protein modifier Pup to the proteasomal substrate proteins, thereby targeting them for proteasomal degradation. This tagging system is termed pupylation. The ligation reaction involves the side-chain carboxylate of the C-terminal glutamate of Pup and the side-chain amino group of a substrate lysine. The protein is Pup--protein ligase of Bifidobacterium longum subsp. infantis (strain ATCC 15697 / DSM 20088 / JCM 1222 / NCTC 11817 / S12).